The chain runs to 755 residues: Probable ubiquitin carboxyl-terminal hydrolase creB (755 aa).

The disordered stretch occupies residues 1-32 (MGSFLRSLRRDVGPPTPSVGATPAKKEPPVPP). The USP domain occupies 55 to 468 (FGMENYGNTC…CAYVLFYQET (414 aa)). Cysteine 64 (nucleophile) is an active-site residue. Disordered regions lie at residues 119–146 (EKQK…DSPE) and 237–270 (EASK…TPNT). Over residues 237–246 (EASKQPEPER) the composition is skewed to basic and acidic residues. Residues 254 to 270 (ADSTELSGSSGSKTPNT) show a composition bias toward polar residues. Residue histidine 419 is the Proton acceptor of the active site. Residues 495 to 755 (TLKQNGYPLS…LKKKSFSILS (261 aa)) are disordered. The segment covering 547 to 560 (ESSPADPSTTASAT) has biased composition (low complexity). A compositionally biased stretch (basic and acidic residues) spans 577–648 (KKSDSHFKKE…RRHSPDDTKK (72 aa)). A coiled-coil region spans residues 581-630 (SHFKKERAKEEKERKANEKEKEKQRRRDQEARIREQRREDAEIRAALEAS). Residues 654–666 (SRLKRGSKSFSHR) show a composition bias toward basic residues. Residues 693 to 709 (NGASESQQQLPNGQSPG) are compositionally biased toward polar residues. Basic and acidic residues predominate over residues 718-733 (TGLDEERDTLKDPKHD). Residues 734–755 (RSGHHGKWRSFSLKKKSFSILS) show a composition bias toward basic residues.

It belongs to the peptidase C19 family. In terms of assembly, interacts with creA, creC and qutD.

The catalysed reaction is Thiol-dependent hydrolysis of ester, thioester, amide, peptide and isopeptide bonds formed by the C-terminal Gly of ubiquitin (a 76-residue protein attached to proteins as an intracellular targeting signal).. Ubiquitin thioesterase component of the regulatory network controlling carbon source utilization through ubiquitination and deubiquitination involving creA, creB, creC, creD and acrB. Deubiquitinates the creA catabolic repressor and the quinate permease qutD. Also plays a role in response to carbon starvation and the control of extracellular proteases activity. This Aspergillus flavus (strain ATCC 200026 / FGSC A1120 / IAM 13836 / NRRL 3357 / JCM 12722 / SRRC 167) protein is Probable ubiquitin carboxyl-terminal hydrolase creB (creB).